A 154-amino-acid polypeptide reads, in one-letter code: Myoglobin (154 aa).

Residues 2–148 form the Globin domain; it reads GLSDGEWQLV…FRNDMATKYK (147 aa). Ser-4 carries the post-translational modification Phosphoserine. Nitrite is bound at residue His-65. O2 is bound at residue His-65. His-94 is a heme b binding site.

This sequence belongs to the globin family. Monomeric.

The protein localises to the cytoplasm. It localises to the sarcoplasm. The catalysed reaction is Fe(III)-heme b-[protein] + nitric oxide + H2O = Fe(II)-heme b-[protein] + nitrite + 2 H(+). The enzyme catalyses H2O2 + AH2 = A + 2 H2O. Monomeric heme protein which primary function is to store oxygen and facilitate its diffusion within muscle tissues. Reversibly binds oxygen through a pentacoordinated heme iron and enables its timely and efficient release as needed during periods of heightened demand. Depending on the oxidative conditions of tissues and cells, and in addition to its ability to bind oxygen, it also has a nitrite reductase activity whereby it regulates the production of bioactive nitric oxide. Under stress conditions, like hypoxia and anoxia, it also protects cells against reactive oxygen species thanks to its pseudoperoxidase activity. The polypeptide is Myoglobin (MB) (Tachyglossus aculeatus aculeatus (Southeast Australian short-beaked echidna)).